A 296-amino-acid polypeptide reads, in one-letter code: NAD kinase (296 aa).

Catalysis depends on aspartate 72, which acts as the Proton acceptor. Residues 72–73 (DG), 146–147 (ND), arginine 157, arginine 174, aspartate 176, 187–192 (TAYALS), and glutamine 247 contribute to the NAD(+) site.

Belongs to the NAD kinase family. The cofactor is a divalent metal cation.

It localises to the cytoplasm. The catalysed reaction is NAD(+) + ATP = ADP + NADP(+) + H(+). Its function is as follows. Involved in the regulation of the intracellular balance of NAD and NADP, and is a key enzyme in the biosynthesis of NADP. Catalyzes specifically the phosphorylation on 2'-hydroxyl of the adenosine moiety of NAD to yield NADP. This is NAD kinase from Hahella chejuensis (strain KCTC 2396).